We begin with the raw amino-acid sequence, 242 residues long: tRNA pseudouridine synthase A (242 aa).

Asp-51 serves as the catalytic Nucleophile. Position 107 (Tyr-107) interacts with substrate.

This sequence belongs to the tRNA pseudouridine synthase TruA family. As to quaternary structure, homodimer.

It carries out the reaction uridine(38/39/40) in tRNA = pseudouridine(38/39/40) in tRNA. Formation of pseudouridine at positions 38, 39 and 40 in the anticodon stem and loop of transfer RNAs. This Helicobacter pylori (strain HPAG1) protein is tRNA pseudouridine synthase A.